A 200-amino-acid polypeptide reads, in one-letter code: Urease accessory protein UreG (200 aa).

11–18 contributes to the GTP binding site; it reads GPVGSGKT.

Belongs to the SIMIBI class G3E GTPase family. UreG subfamily. As to quaternary structure, homodimer. UreD, UreF and UreG form a complex that acts as a GTP-hydrolysis-dependent molecular chaperone, activating the urease apoprotein by helping to assemble the nickel containing metallocenter of UreC. The UreE protein probably delivers the nickel.

Its subcellular location is the cytoplasm. Functionally, facilitates the functional incorporation of the urease nickel metallocenter. This process requires GTP hydrolysis, probably effectuated by UreG. In Thermosynechococcus vestitus (strain NIES-2133 / IAM M-273 / BP-1), this protein is Urease accessory protein UreG.